Reading from the N-terminus, the 402-residue chain is TBC1 domain family member 20 (402 aa).

Residues 1 to 27 (MALRPSKGDGSAGRWDRGAGKADFNAK) are disordered. Residues 14 to 26 (RWDRGAGKADFNA) are compositionally biased toward basic and acidic residues. The Rab-GAP TBC domain maps to 59-245 (LLTDEIRCQV…RLYDFFLACH (187 aa)). 2 helical membrane-spanning segments follow: residues 237-257 (LYDFFLACHPLMPIYFAAVIV) and 366-386 (FVKLAVMGLTVALGAAALAVV).

It is found in the membrane. In terms of biological role, GTPase-activating protein specific for Rab1 and Rab2 small GTPase families for which it can accelerate the intrinsic GTP hydrolysis rate by more than five orders of magnitude. Also shows GAP activity for RAB18 GTPase. Promotes RAB18 dissociation from the endoplasmic reticulum (ER) membrane into the cytosol, probably through stimulating RAB18 GTP-hydrolysis. Involved in maintaining endoplasmic reticulum structure. The chain is TBC1 domain family member 20 from Mus musculus (Mouse).